A 110-amino-acid chain; its full sequence is Putative membrane protein insertion efficiency factor (110 aa).

Belongs to the UPF0161 family.

It localises to the cell inner membrane. Its function is as follows. Could be involved in insertion of integral membrane proteins into the membrane. The protein is Putative membrane protein insertion efficiency factor of Campylobacter hominis (strain ATCC BAA-381 / DSM 21671 / CCUG 45161 / LMG 19568 / NCTC 13146 / CH001A).